The chain runs to 471 residues: Ribulose bisphosphate carboxylase large chain (471 aa).

Residues Asn115 and Thr165 each coordinate substrate. The active-site Proton acceptor is Lys167. Lys169 lines the substrate pocket. Residues Lys193, Asp195, and Glu196 each contribute to the Mg(2+) site. Lys193 is subject to N6-carboxylysine. Residue His286 is the Proton acceptor of the active site. Residues Arg287, His319, and Ser371 each contribute to the substrate site.

It belongs to the RuBisCO large chain family. Type I subfamily. Heterohexadecamer of 8 large chains and 8 small chains. Mg(2+) is required as a cofactor.

The protein resides in the carboxysome. The catalysed reaction is 2 (2R)-3-phosphoglycerate + 2 H(+) = D-ribulose 1,5-bisphosphate + CO2 + H2O. It catalyses the reaction D-ribulose 1,5-bisphosphate + O2 = 2-phosphoglycolate + (2R)-3-phosphoglycerate + 2 H(+). RuBisCO catalyzes two reactions: the carboxylation of D-ribulose 1,5-bisphosphate, the primary event in carbon dioxide fixation, as well as the oxidative fragmentation of the pentose substrate in the photorespiration process. Both reactions occur simultaneously and in competition at the same active site. The polypeptide is Ribulose bisphosphate carboxylase large chain (Prochlorococcus marinus (strain MIT 9301)).